The primary structure comprises 185 residues: UPF0301 protein Csal_0058 (185 aa).

The protein belongs to the UPF0301 (AlgH) family.

This Chromohalobacter salexigens (strain ATCC BAA-138 / DSM 3043 / CIP 106854 / NCIMB 13768 / 1H11) protein is UPF0301 protein Csal_0058.